Here is an 88-residue protein sequence, read N- to C-terminus: UPF0367 protein Synpcc7942_1638 (88 aa).

This sequence belongs to the UPF0367 family.

This is UPF0367 protein Synpcc7942_1638 from Synechococcus elongatus (strain ATCC 33912 / PCC 7942 / FACHB-805) (Anacystis nidulans R2).